The chain runs to 259 residues: Protein GrpE (259 aa).

Disordered regions lie at residues 1-75 and 227-259; these read MNSD…KGSD and GPGPKAVNEEIPDQSASNQELSESVDGPTKDEN. Positions 20-40 are enriched in low complexity; the sequence is NNPSENFVSSSNSNESVNQVE. Residues 46 to 60 show a composition bias toward basic and acidic residues; sequence EVEHQVKNDSVDTAK. Positions 61–73 are enriched in polar residues; it reads EQSSTSCESNIKG.

It belongs to the GrpE family. In terms of assembly, homodimer.

It is found in the cytoplasm. Functionally, participates actively in the response to hyperosmotic and heat shock by preventing the aggregation of stress-denatured proteins, in association with DnaK and GrpE. It is the nucleotide exchange factor for DnaK and may function as a thermosensor. Unfolded proteins bind initially to DnaJ; upon interaction with the DnaJ-bound protein, DnaK hydrolyzes its bound ATP, resulting in the formation of a stable complex. GrpE releases ADP from DnaK; ATP binding to DnaK triggers the release of the substrate protein, thus completing the reaction cycle. Several rounds of ATP-dependent interactions between DnaJ, DnaK and GrpE are required for fully efficient folding. The protein is Protein GrpE of Prochlorococcus marinus (strain NATL1A).